The chain runs to 232 residues: Ribonuclease 3 (232 aa).

The region spanning 5–134 (NDAISKIIDY…LIGAIYIDGG (130 aa)) is the RNase III domain. Position 47 (glutamate 47) interacts with Mg(2+). Aspartate 51 is a catalytic residue. Positions 120 and 123 each coordinate Mg(2+). The active site involves glutamate 123. The 70-residue stretch at 159–228 (DPKTSLQEWT…AELMLEKIGK (70 aa)) folds into the DRBM domain.

The protein belongs to the ribonuclease III family. As to quaternary structure, homodimer. The cofactor is Mg(2+).

Its subcellular location is the cytoplasm. It catalyses the reaction Endonucleolytic cleavage to 5'-phosphomonoester.. Functionally, digests double-stranded RNA. Involved in the processing of primary rRNA transcript to yield the immediate precursors to the large and small rRNAs (23S and 16S). Processes some mRNAs, and tRNAs when they are encoded in the rRNA operon. Processes pre-crRNA and tracrRNA of type II CRISPR loci if present in the organism. This Wolbachia pipientis wMel protein is Ribonuclease 3.